Reading from the N-terminus, the 301-residue chain is MSGGLDILSLKEDDVTKMLGAQTHIGSENSDYQMEQYVYKRRNDGVHILNLRRTWEKLLLAARAIVAIEHPADVFVISSRPIGQRAVLKFASYTGATPIAGRFTPGAFTNQIQAAFREPRLLVVTDPHTDHQPITEAAYVNIPVIAFCNTESPLRFVDIAIPCNNKSPHSIGLMWWLLAREVLRFRGTIPREPKWDVVVDLFFYRDPEEAEKEEQAGKESAAAIADKPADEFAAHAPTESWNDTVVPSADLAPQSWAEESASIPQYAPAPQAAAAPVADDWTTPVGADDWGQDWSNSTSQW.

The interval 237-301 is disordered; sequence PTESWNDTVV…QDWSNSTSQW (65 aa). Positions 264 to 278 are enriched in low complexity; that stretch reads PQYAPAPQAAAAPVA.

Belongs to the universal ribosomal protein uS2 family. As to quaternary structure, component of the small ribosomal subunit. Mature ribosomes consist of a small (40S) and a large (60S) subunit. The 40S subunit contains about 33 different proteins and 1 molecule of RNA (18S). The 60S subunit contains about 49 different proteins and 3 molecules of RNA (28S, 5.8S and 5S). Interacts with ribosomal protein S21.

It is found in the cytoplasm. In terms of biological role, required for the assembly and/or stability of the 40S ribosomal subunit. Required for the processing of the 20S rRNA-precursor to mature 18S rRNA in a late step of the maturation of 40S ribosomal subunits. This chain is Small ribosomal subunit protein uS2, found in Diaphorina citri (Asian citrus psyllid).